A 201-amino-acid chain; its full sequence is Sterile alpha motif domain-containing protein 12 (201 aa).

In terms of domain architecture, SAM spans 77–143 (WTQQDVCKWL…LQQVLQLKVR (67 aa)).

The sequence is that of Sterile alpha motif domain-containing protein 12 (SAMD12) from Pongo abelii (Sumatran orangutan).